Reading from the N-terminus, the 439-residue chain is Cobyrinate a,c-diamide synthase (439 aa).

One can recognise a GATase cobBQ-type domain in the interval 238–431; that stretch reads KIAVAYDKAF…AHVNFLGNIE (194 aa). Cys-320 (nucleophile) is an active-site residue.

This sequence belongs to the CobB/CbiA family. Requires Mg(2+) as cofactor.

It carries out the reaction cob(II)yrinate + 2 L-glutamine + 2 ATP + 2 H2O = cob(II)yrinate a,c diamide + 2 L-glutamate + 2 ADP + 2 phosphate + 2 H(+). The protein operates within cofactor biosynthesis; adenosylcobalamin biosynthesis; cob(II)yrinate a,c-diamide from sirohydrochlorin (anaerobic route): step 10/10. Its function is as follows. Catalyzes the ATP-dependent amidation of the two carboxylate groups at positions a and c of cobyrinate, using either L-glutamine or ammonia as the nitrogen source. This is Cobyrinate a,c-diamide synthase from Clostridium tetani (strain Massachusetts / E88).